We begin with the raw amino-acid sequence, 226 residues long: Acyl-protein thioesterase 1 homolog 1 (226 aa).

Residues Ser121, Asp174, and His206 each act as charge relay system in the active site.

This sequence belongs to the AB hydrolase superfamily. AB hydrolase 2 family.

The protein resides in the cytoplasm. It localises to the nucleus. It carries out the reaction S-hexadecanoyl-L-cysteinyl-[protein] + H2O = L-cysteinyl-[protein] + hexadecanoate + H(+). In terms of biological role, hydrolyzes fatty acids from S-acylated cysteine residues in proteins with a strong preference for palmitoylated G-alpha proteins over other acyl substrates. Mediates the deacylation of G-alpha proteins such as GPA1 in vivo, but has weak or no activity toward palmitoylated Ras proteins. Has weak lysophospholipase activity in vitro; however such activity may not exist in vivo. In Dictyostelium discoideum (Social amoeba), this protein is Acyl-protein thioesterase 1 homolog 1.